A 154-amino-acid polypeptide reads, in one-letter code: MRKLKSKRKNYQPDPIYQDTLVTRFVNHLMKDGKKTIAYRIFYNCISEIEKTKKNGLKIWKEALDNVMPHVEVRSRRIGGSNIQVPTQIPPYVKVTKAMKLLISCARERNEKKMYKKLAEEILSAYKKEGAAFKIRENIHKMAEANKAFSHLKF.

It belongs to the universal ribosomal protein uS7 family. In terms of assembly, part of the 30S ribosomal subunit. Contacts proteins S9 and S11.

In terms of biological role, one of the primary rRNA binding proteins, it binds directly to 16S rRNA where it nucleates assembly of the head domain of the 30S subunit. Is located at the subunit interface close to the decoding center, probably blocks exit of the E-site tRNA. In Karelsulcia muelleri (strain GWSS) (Sulcia muelleri), this protein is Small ribosomal subunit protein uS7.